Here is a 103-residue protein sequence, read N- to C-terminus: MDRVNRLAAQRAVVIFSMSSCCMCHTVTRLFCELGVNPTVVELDEDPRGKEMEKALARLLGRSPAVPAVFIGGRLVGSTDKVMSLHLSGNLVPLLRNAGALWV.

One can recognise a Glutaredoxin domain in the interval 1 to 102; sequence MDRVNRLAAQ…PLLRNAGALW (102 aa). A disulfide bond links C21 and C24.

Belongs to the glutaredoxin family. CC-type subfamily.

The protein localises to the cytoplasm. In terms of biological role, has a glutathione-disulfide oxidoreductase activity in the presence of NADPH and glutathione reductase. Reduces low molecular weight disulfides and proteins. This Oryza sativa subsp. japonica (Rice) protein is Glutaredoxin-C1 (GRXC1).